An 88-amino-acid chain; its full sequence is Meiosis expressed gene 1 protein homolog (88 aa).

It belongs to the MEIG1 family. As to quaternary structure, interacts with PACRG. Interacts with MORN3.

In terms of biological role, essential for spermiogenesis. The sequence is that of Meiosis expressed gene 1 protein homolog from Homo sapiens (Human).